The following is a 496-amino-acid chain: Endoglucanase (496 aa).

A signal peptide spans 1-23 (MGYHSVFIAVFLWSSMVCHNGLA). Catalysis depends on Asp-93, which acts as the Nucleophile. Residues His-415, Asp-467, and Glu-476 contribute to the active site.

It belongs to the glycosyl hydrolase 9 (cellulase E) family.

It carries out the reaction Endohydrolysis of (1-&gt;4)-beta-D-glucosidic linkages in cellulose, lichenin and cereal beta-D-glucans.. Involved in ripening fruit process. The chain is Endoglucanase from Phaseolus vulgaris (Kidney bean).